The primary structure comprises 142 residues: Large ribosomal subunit protein uL13 (142 aa).

It belongs to the universal ribosomal protein uL13 family. Part of the 50S ribosomal subunit.

In terms of biological role, this protein is one of the early assembly proteins of the 50S ribosomal subunit, although it is not seen to bind rRNA by itself. It is important during the early stages of 50S assembly. This is Large ribosomal subunit protein uL13 from Actinobacillus succinogenes (strain ATCC 55618 / DSM 22257 / CCUG 43843 / 130Z).